The sequence spans 255 residues: Homeobox-leucine zipper protein ATHB-23 (255 aa).

Residues 68 to 127 constitute a DNA-binding region (homeobox); sequence MGEKKRRLNMEQLKALEKDFELGNKLESDRKLELARALGLQPRQIAIWFQNRRARSKTKQ. The segment at 128–163 is leucine-zipper; it reads LEKDYDMLKRQFESLRDENEVLQTQNQKLQAQVMAL.

It belongs to the HD-ZIP homeobox family. Class I subfamily. As to expression, expressed in young leaves, in the adaxial domain of leaf primordia and the rib meristem. Expressed in the styles of flowers and siliques.

It is found in the nucleus. Its function is as follows. Probable transcription factor. The polypeptide is Homeobox-leucine zipper protein ATHB-23 (ATHB-23) (Arabidopsis thaliana (Mouse-ear cress)).